Reading from the N-terminus, the 265-residue chain is 4-hydroxy-tetrahydrodipicolinate reductase (265 aa).

NAD(+) is bound by residues 7 to 12 (GASGRM) and aspartate 33. NADP(+) is bound at residue arginine 34. NAD(+) contacts are provided by residues 96–98 (GTT) and 120–123 (AANM). The active-site Proton donor/acceptor is the histidine 153. Residue histidine 154 participates in (S)-2,3,4,5-tetrahydrodipicolinate binding. The Proton donor role is filled by lysine 157. 163–164 (GT) is a (S)-2,3,4,5-tetrahydrodipicolinate binding site.

The protein belongs to the DapB family.

It is found in the cytoplasm. It carries out the reaction (S)-2,3,4,5-tetrahydrodipicolinate + NAD(+) + H2O = (2S,4S)-4-hydroxy-2,3,4,5-tetrahydrodipicolinate + NADH + H(+). The enzyme catalyses (S)-2,3,4,5-tetrahydrodipicolinate + NADP(+) + H2O = (2S,4S)-4-hydroxy-2,3,4,5-tetrahydrodipicolinate + NADPH + H(+). It functions in the pathway amino-acid biosynthesis; L-lysine biosynthesis via DAP pathway; (S)-tetrahydrodipicolinate from L-aspartate: step 4/4. Functionally, catalyzes the conversion of 4-hydroxy-tetrahydrodipicolinate (HTPA) to tetrahydrodipicolinate. The protein is 4-hydroxy-tetrahydrodipicolinate reductase of Burkholderia orbicola (strain AU 1054).